The primary structure comprises 855 residues: Suppressor of tumorigenicity 14 protein homolog (855 aa).

A disordered region spans residues 1 to 21 (MKSERARRGAGGSGDLGAGFK). The Cytoplasmic segment spans residues 1-55 (MKSERARRGAGGSGDLGAGFKYTSRPENMNGCEEGVEFLPANNSSKVEKGGPRRW). Phosphoserine is present on serine 13. Residues 56-76 (VVLMAVLAAFLALSLLAGLLA) traverse the membrane as a helical; Signal-anchor for type II membrane protein segment. Topologically, residues 77 to 855 (WHFQDRNVRV…RDWIKAQIGV (779 aa)) are extracellular. The 118-residue stretch at 86–203 (VQKIFNGYLS…TSVVAFPSDP (118 aa)) folds into the SEA domain. An N-linked (GlcNAc...) asparagine glycan is attached at asparagine 109. The cysteines at positions 214 and 244 are disulfide-linked. CUB domains follow at residues 214–334 (CSFA…FFQL) and 340–447 (CGGY…FLSF). Residues asparagine 302 and asparagine 365 are each glycosylated (N-linked (GlcNAc...) asparagine). 15 disulfides stabilise this stretch: cysteine 340–cysteine 366, cysteine 397–cysteine 410, cysteine 453–cysteine 464, cysteine 459–cysteine 477, cysteine 471–cysteine 486, cysteine 488–cysteine 501, cysteine 496–cysteine 514, cysteine 508–cysteine 523, cysteine 525–cysteine 537, cysteine 532–cysteine 550, cysteine 544–cysteine 559, cysteine 567–cysteine 579, cysteine 574–cysteine 593, cysteine 587–cysteine 602, and cysteine 641–cysteine 657. LDL-receptor class A domains follow at residues 452 to 487 (PCPGSFMCNTGRCIRKELRCDGWADCTDYSDELDCK), 487 to 524 (KCNATYQFTCRDKFCKPLFWVCDSVKDCEDGSDEEGCS), 524 to 560 (SCPPNTFKCGNGKCLPQSQQCDRKDDCGDGSDEAKCQ), and 566 to 603 (PCTEHTHRCLNGLCVDKSNPQCDGNEDCTDGSDEKDCD). Asparagine 489 carries N-linked (GlcNAc...) asparagine glycosylation. The Peptidase S1 domain maps to 615 to 854 (VVGGENSDQG…FRDWIKAQIG (240 aa)). Catalysis depends on charge relay system residues histidine 656 and aspartate 711. Asparagine 772 carries an N-linked (GlcNAc...) asparagine glycan. Cystine bridges form between cysteine 776-cysteine 790 and cysteine 801-cysteine 830. Catalysis depends on serine 805, which acts as the Charge relay system.

This sequence belongs to the peptidase S1 family. Interacts with CDCP1. May interact with TMEFF1.

It is found in the membrane. The catalysed reaction is Cleaves various synthetic substrates with Arg or Lys at the P1 position and prefers small side-chain amino acids, such as Ala and Gly, at the P2 position.. Its function is as follows. Exhibits trypsin-like activity as defined by cleavage of synthetic substrates with Arg or Lys as the P1 site. Involved in the terminal differentiation of keratinocytes through prostasin (PRSS8) activation and filaggrin (FLG) processing. Proteolytically cleaves and therefore activates TMPRSS13. This Bos taurus (Bovine) protein is Suppressor of tumorigenicity 14 protein homolog (ST14).